A 304-amino-acid chain; its full sequence is UDP-3-O-acyl-N-acetylglucosamine deacetylase (304 aa).

3 residues coordinate Zn(2+): H78, H237, and D241. Catalysis depends on H264, which acts as the Proton donor.

It belongs to the LpxC family. Zn(2+) is required as a cofactor.

It carries out the reaction a UDP-3-O-[(3R)-3-hydroxyacyl]-N-acetyl-alpha-D-glucosamine + H2O = a UDP-3-O-[(3R)-3-hydroxyacyl]-alpha-D-glucosamine + acetate. Its pathway is glycolipid biosynthesis; lipid IV(A) biosynthesis; lipid IV(A) from (3R)-3-hydroxytetradecanoyl-[acyl-carrier-protein] and UDP-N-acetyl-alpha-D-glucosamine: step 2/6. Functionally, catalyzes the hydrolysis of UDP-3-O-myristoyl-N-acetylglucosamine to form UDP-3-O-myristoylglucosamine and acetate, the committed step in lipid A biosynthesis. This is UDP-3-O-acyl-N-acetylglucosamine deacetylase from Polynucleobacter asymbioticus (strain DSM 18221 / CIP 109841 / QLW-P1DMWA-1) (Polynucleobacter necessarius subsp. asymbioticus).